Reading from the N-terminus, the 428-residue chain is 3-phosphoshikimate 1-carboxyvinyltransferase (428 aa).

Residues Lys-21, Ser-22, and Arg-26 each coordinate 3-phosphoshikimate. Lys-21 provides a ligand contact to phosphoenolpyruvate. Residues Gly-91 and Arg-119 each contribute to the phosphoenolpyruvate site. 3-phosphoshikimate contacts are provided by Ser-164, Gln-166, Asp-313, and Lys-340. Residue Gln-166 coordinates phosphoenolpyruvate. Asp-313 (proton acceptor) is an active-site residue. Phosphoenolpyruvate is bound by residues Arg-344 and Arg-386.

Belongs to the EPSP synthase family. Monomer.

It is found in the cytoplasm. The catalysed reaction is 3-phosphoshikimate + phosphoenolpyruvate = 5-O-(1-carboxyvinyl)-3-phosphoshikimate + phosphate. Its pathway is metabolic intermediate biosynthesis; chorismate biosynthesis; chorismate from D-erythrose 4-phosphate and phosphoenolpyruvate: step 6/7. Its function is as follows. Catalyzes the transfer of the enolpyruvyl moiety of phosphoenolpyruvate (PEP) to the 5-hydroxyl of shikimate-3-phosphate (S3P) to produce enolpyruvyl shikimate-3-phosphate and inorganic phosphate. This chain is 3-phosphoshikimate 1-carboxyvinyltransferase, found in Campylobacter jejuni (strain RM1221).